A 120-amino-acid chain; its full sequence is Aspartate 1-decarboxylase (120 aa).

The active-site Schiff-base intermediate with substrate; via pyruvic acid is the Ser25. Position 25 is a pyruvic acid (Ser) (Ser25). A substrate-binding site is contributed by Thr57. Residue Tyr58 is the Proton donor of the active site. Residue 73–75 coordinates substrate; the sequence is GAA.

The protein belongs to the PanD family. Heterooctamer of four alpha and four beta subunits. It depends on pyruvate as a cofactor. In terms of processing, is synthesized initially as an inactive proenzyme, which is activated by self-cleavage at a specific serine bond to produce a beta-subunit with a hydroxyl group at its C-terminus and an alpha-subunit with a pyruvoyl group at its N-terminus.

Its subcellular location is the cytoplasm. It carries out the reaction L-aspartate + H(+) = beta-alanine + CO2. Its pathway is cofactor biosynthesis; (R)-pantothenate biosynthesis; beta-alanine from L-aspartate: step 1/1. Catalyzes the pyruvoyl-dependent decarboxylation of aspartate to produce beta-alanine. This is Aspartate 1-decarboxylase from Polynucleobacter asymbioticus (strain DSM 18221 / CIP 109841 / QLW-P1DMWA-1) (Polynucleobacter necessarius subsp. asymbioticus).